Consider the following 305-residue polypeptide: UDP-3-O-acyl-N-acetylglucosamine deacetylase (305 aa).

Zn(2+) is bound by residues histidine 79, histidine 238, and aspartate 242. Histidine 265 (proton donor) is an active-site residue.

It belongs to the LpxC family. The cofactor is Zn(2+).

It carries out the reaction a UDP-3-O-[(3R)-3-hydroxyacyl]-N-acetyl-alpha-D-glucosamine + H2O = a UDP-3-O-[(3R)-3-hydroxyacyl]-alpha-D-glucosamine + acetate. Its pathway is glycolipid biosynthesis; lipid IV(A) biosynthesis; lipid IV(A) from (3R)-3-hydroxytetradecanoyl-[acyl-carrier-protein] and UDP-N-acetyl-alpha-D-glucosamine: step 2/6. In terms of biological role, catalyzes the hydrolysis of UDP-3-O-myristoyl-N-acetylglucosamine to form UDP-3-O-myristoylglucosamine and acetate, the committed step in lipid A biosynthesis. The protein is UDP-3-O-acyl-N-acetylglucosamine deacetylase of Salmonella paratyphi A (strain ATCC 9150 / SARB42).